The sequence spans 604 residues: MSMYPHRPIAGAPIQNMGRLNELLDGIRMEFESQARQYETCQHDLATQLQELQVIREKVFQMEQHQMNVKQKYEDEIALLRRQLEARGGAPGNMNPPPQHPGQQQPPAIGLGSNVFSAIMAGQGGQALVPPPPPPQQQEQPAHMPAPPGLQGPPPPPPPPSQQPPFQQQYQGPQGPGNFPPQPPQSTASPGPAGKRGIGRPPAGGPATPQINTPIPYNGGPAQSPQVPTHPTPDHTRMAQHHQPPPPPPSQTNALSELDPDRLPNHIKKMKDDWWVIFNAAVPRVLDVELVHTLQHESVVCCVRFSMDGKYVATGCNRSAQIYDVETGEKLCILQDENIDLTGDLYIRSVCFSPDGKYLATGAEDKLIRVWDIQSRTIRNTFHGHEQDIYSLDFSRDGRTIASGSGDRTVRLWDIETGQNTSVLSIEDGVTTVAISPDKQFVAAGSLDKSVRVWDMRGYLAERLEGPDGHKDSVYSVAFSPDGRNLVSGSLDKTIKMWELSAPRGIPSSAPPKGGRCIKTFEGHRDFVLSVALTPDSQWVLSGSKDRGVQFWDPRTGHTQLMLQGHKNSVISVAPSPVTGPNGVGYFATGSGDMRARIWSYSRI.

Disordered stretches follow at residues 87–110 (RGGA…PAIG) and 124–264 (GGQA…DRLP). The segment covering 144 to 163 (MPAPPGLQGPPPPPPPPSQQ) has biased composition (pro residues). 2 stretches are compositionally biased toward low complexity: residues 164–177 (PPFQ…QGPG) and 190–209 (PGPA…PATP). Residues 210–229 (QINTPIPYNGGPAQSPQVPT) show a composition bias toward polar residues. WD repeat units follow at residues 295–324 (QHES…QIYD), 342–372 (TGDL…RVWD), 384–414 (GHEQ…RLWD), 425–455 (SIED…RVWD), 469–499 (GHKD…KMWE), 523–553 (GHRD…QFWD), and 565–600 (GHKN…RIWS).

Its function is as follows. Represses transcription by RNA polymerase II. May be involved at several stages of conidiation and other growth and development processes. Appears to regulate genes that are expressed in asexual and sexual spore pathways. This chain is Transcriptional repressor rco-1 (rco-1), found in Neurospora crassa (strain ATCC 24698 / 74-OR23-1A / CBS 708.71 / DSM 1257 / FGSC 987).